Consider the following 411-residue polypeptide: MITLIKNIQELLQVRQTSISKVSGAEMAELPTIKNAFLVIKDDLIADFGSMENLPEIKADSIINASGRVVLPAWCDSHTHIVYAGNREQEFVDRINGFTYEEIANRGGGILNSAKKLNETSEEEIYEQSKIRLEEVMRLGTGAVEIKSGYGLTVEGELKMLRVIKKLAENYPISIKATFLGAHAFPTHYKENKAGYIDEIITKMLPEIAQNKLADYVDVFCESGYFSVEETEKIMQAGIDFGLKPKIHVNQFNSIGGIQSGVKFNALSVDHLEIMNPEDIEALKGTETMPVALPSCSYFLSIPYTPAREMIKAGLPLALATDFNPGSTPSGNMNFVVATACIKMKMTPEEAINAATINGAYAMGLSETHGSITKGKKANLIITKPISSYYQIPYAFGSNLIEDVLIDGQII.

Residues His78 and His80 each contribute to the Fe(3+) site. The Zn(2+) site is built by His78 and His80. Residues Arg87, Tyr150, and His183 each coordinate 4-imidazolone-5-propanoate. Residue Tyr150 coordinates N-formimidoyl-L-glutamate. His248 contributes to the Fe(3+) binding site. His248 is a binding site for Zn(2+). A 4-imidazolone-5-propanoate-binding site is contributed by Gln251. Asp322 serves as a coordination point for Fe(3+). Asp322 lines the Zn(2+) pocket. Asn324 and Gly326 together coordinate N-formimidoyl-L-glutamate. Ser327 contacts 4-imidazolone-5-propanoate.

This sequence belongs to the metallo-dependent hydrolases superfamily. HutI family. It depends on Zn(2+) as a cofactor. Fe(3+) is required as a cofactor.

Its subcellular location is the cytoplasm. It catalyses the reaction 4-imidazolone-5-propanoate + H2O = N-formimidoyl-L-glutamate. It functions in the pathway amino-acid degradation; L-histidine degradation into L-glutamate; N-formimidoyl-L-glutamate from L-histidine: step 3/3. Its function is as follows. Catalyzes the hydrolytic cleavage of the carbon-nitrogen bond in imidazolone-5-propanoate to yield N-formimidoyl-L-glutamate. It is the third step in the universal histidine degradation pathway. This Flavobacterium johnsoniae (strain ATCC 17061 / DSM 2064 / JCM 8514 / BCRC 14874 / CCUG 350202 / NBRC 14942 / NCIMB 11054 / UW101) (Cytophaga johnsonae) protein is Imidazolonepropionase.